A 411-amino-acid chain; its full sequence is Secretion apparatus protein BsaZ (411 aa).

4 helical membrane passes run 28–48, 80–100, 137–157, and 175–195; these read IVAL…VDLT, IAAP…LVQS, ALLY…LYHA, and IVLT…VLIL. The disordered stretch occupies residues 341–411; the sequence is AANRGGPPPE…APARTGDQNA (71 aa). Positions 370 to 404 are enriched in low complexity; that stretch reads DACADNAFPDDAPPGAAAPNAGSPDSPAPDGGAPA.

Belongs to the type III secretion exporter family.

It is found in the cell membrane. Part of the bsa type III secretion system, is involved in the intracellular replication of invading bacteria inside the host cell. Probably necessary for the lysis of the vacuole membrane and escape into the host cell cytoplasm. The sequence is that of Secretion apparatus protein BsaZ (bsaZ) from Burkholderia mallei (strain NCTC 10247).